The following is a 1025-amino-acid chain: Complement receptor type 2 (1025 aa).

A signal peptide spans 1–11; the sequence is MLTWFLFYFSE. In terms of domain architecture, Sushi 1 spans 12–75; that stretch reads ISCDPPPEVK…WDKAPPICES (64 aa). At 12–963 the chain is on the extracellular side; the sequence is ISCDPPPEVK…PLALCKYRRW (952 aa). Intrachain disulfides connect cysteine 14/cysteine 56 and cysteine 42/cysteine 73. Asparagine 77 and asparagine 113 each carry an N-linked (GlcNAc...) asparagine glycan. 14 consecutive Sushi domains span residues 80–140, 144–204, 205–265, 266–336, 341–400, 401–460, 461–516, 517–587, 592–651, 652–706, 707–771, 776–835, 839–899, and 900–960; these read ISCS…VCES, LECP…TCKE, AQCE…VCKE, ILCP…YCVL, VLCL…VCEK, GCQA…QCTV, AECK…LCKE, ITCP…LCKL, VQCT…LCKK, EGCE…VCTV, ILCQ…QCLQ, THCP…TCIR, LGCQ…FCKE, and VNCS…LCKY. Cystine bridges form between cysteine 82–cysteine 124, cysteine 110–cysteine 138, cysteine 146–cysteine 189, cysteine 175–cysteine 202, cysteine 207–cysteine 248, cysteine 234–cysteine 263, cysteine 268–cysteine 317, cysteine 297–cysteine 334, cysteine 343–cysteine 385, cysteine 371–cysteine 398, cysteine 402–cysteine 445, cysteine 431–cysteine 458, cysteine 463–cysteine 501, cysteine 487–cysteine 514, cysteine 519–cysteine 568, cysteine 548–cysteine 585, cysteine 594–cysteine 636, cysteine 622–cysteine 649, cysteine 654–cysteine 689, cysteine 675–cysteine 704, cysteine 709–cysteine 752, cysteine 738–cysteine 769, cysteine 778–cysteine 820, cysteine 806–cysteine 833, cysteine 841–cysteine 884, and cysteine 870–cysteine 897. Residues asparagine 276, asparagine 316, asparagine 364, and asparagine 380 are each glycosylated (N-linked (GlcNAc...) asparagine). N-linked (GlcNAc...) asparagine glycosylation occurs at asparagine 484. Asparagine 527 carries N-linked (GlcNAc...) asparagine glycosylation. N-linked (GlcNAc...) asparagine glycans are attached at residues asparagine 615 and asparagine 639. An N-linked (GlcNAc...) asparagine glycan is attached at asparagine 694. N-linked (GlcNAc...) asparagine glycans are attached at residues asparagine 754, asparagine 790, asparagine 813, asparagine 823, and asparagine 851. N-linked (GlcNAc...) asparagine glycosylation is present at asparagine 901. Intrachain disulfides connect cysteine 902/cysteine 945 and cysteine 931/cysteine 958. A helical membrane pass occupies residues 964–990; it reads STIPLICGISVGSALIILMSVGFCMIL. Residues 991-1025 are Cytoplasmic-facing; that stretch reads KHRESNYYTKTRPKEGALHLETREVYSIDPYNPAS.

The protein belongs to the receptors of complement activation (RCA) family. As to quaternary structure, interacts (via Sushi domain 1 and 2) with C3. Interacts with CD19. Part of a complex composed of CD19, CR2/CD21, CD81 and IFITM1/CD225 in the membrane of mature B-cells. Interacts (via Sushi domain 1 and 2) with FCER2 (via the C-terminus). Interacts with CD23. Interacts with FCRL5. Interacts with CR1. Interacts with INFNA1. B-lymphocytes.

Its subcellular location is the cell membrane. Its function is as follows. Serves as a receptor for various ligands including complement component CD3d, HNRNPU OR IFNA1. When C3d is bound to antigens, attaches to C3d on B-cell surface and thereby facilitates the recognition and uptake of antigens by B-cells. This interaction enhances B-cell activation and subsequent immune responses. Forms a complex with several partners on the surface of B-cells including CD19, FCRL5 and CD81, to form the B-cell coreceptor complex that plays a crucial role in B-cell activation and signaling. Also induces specific intracellular signaling separately from the BCR and CD19 by activating the tyrosine kinase SRC, which then phosphorylates nucleolin/NCL and triggers AKT and GSK3 kinase activities in a SYK/CD19-independent manner. Acts as a ligand for CD23 (FcepsilonRII), a low-affinity receptor for IgE, which is expressed on B-cells and other immune cells, and thus participates in the regulation of IgE production. This chain is Complement receptor type 2 (Cr2), found in Mus musculus (Mouse).